Here is a 226-residue protein sequence, read N- to C-terminus: Probable septum site-determining protein MinC (226 aa).

It belongs to the MinC family. Interacts with MinD and FtsZ.

Its function is as follows. Cell division inhibitor that blocks the formation of polar Z ring septums. Rapidly oscillates between the poles of the cell to destabilize FtsZ filaments that have formed before they mature into polar Z rings. Prevents FtsZ polymerization. This is Probable septum site-determining protein MinC from Edwardsiella ictaluri (strain 93-146).